A 292-amino-acid polypeptide reads, in one-letter code: NAD kinase (292 aa).

The active-site Proton acceptor is D73. Residues 73 to 74 (DG), 147 to 148 (NE), H158, R175, D177, 188 to 193 (TAYSLS), and Q247 each bind NAD(+).

This sequence belongs to the NAD kinase family. The cofactor is a divalent metal cation.

It is found in the cytoplasm. The catalysed reaction is NAD(+) + ATP = ADP + NADP(+) + H(+). Functionally, involved in the regulation of the intracellular balance of NAD and NADP, and is a key enzyme in the biosynthesis of NADP. Catalyzes specifically the phosphorylation on 2'-hydroxyl of the adenosine moiety of NAD to yield NADP. In Salmonella agona (strain SL483), this protein is NAD kinase.